The following is a 233-amino-acid chain: Proteasome subunit alpha (233 aa).

It belongs to the peptidase T1A family. In terms of assembly, the 20S proteasome core is composed of 14 alpha and 14 beta subunits that assemble into four stacked heptameric rings, resulting in a barrel-shaped structure. The two inner rings, each composed of seven catalytic beta subunits, are sandwiched by two outer rings, each composed of seven alpha subunits. The catalytic chamber with the active sites is on the inside of the barrel. Has a gated structure, the ends of the cylinder being occluded by the N-termini of the alpha-subunits. Is capped at one or both ends by the proteasome regulatory ATPase, PAN. Post-translationally, the N-terminus is blocked.

It is found in the cytoplasm. Its activity is regulated as follows. The formation of the proteasomal ATPase PAN-20S proteasome complex, via the docking of the C-termini of PAN into the intersubunit pockets in the alpha-rings, triggers opening of the gate for substrate entry. Interconversion between the open-gate and close-gate conformations leads to a dynamic regulation of the 20S proteasome proteolysis activity. Functionally, component of the proteasome core, a large protease complex with broad specificity involved in protein degradation. The T.acidophilum proteasome is able to cleave oligopeptides after Tyr, Leu, Phe, and to a lesser extent after Glu and Arg. Thus, displays chymotrypsin-like activity and low level of caspase-like and trypsin-like activities. This chain is Proteasome subunit alpha, found in Thermoplasma acidophilum (strain ATCC 25905 / DSM 1728 / JCM 9062 / NBRC 15155 / AMRC-C165).